A 602-amino-acid chain; its full sequence is Elongation factor 4 (602 aa).

Residues 6-188 (KYIRNFCIIA…AIIRRVPPPR (183 aa)) form the tr-type G domain. GTP is bound by residues 18-23 (DHGKST) and 135-138 (NKID).

This sequence belongs to the TRAFAC class translation factor GTPase superfamily. Classic translation factor GTPase family. LepA subfamily.

It localises to the cell membrane. It carries out the reaction GTP + H2O = GDP + phosphate + H(+). Functionally, required for accurate and efficient protein synthesis under certain stress conditions. May act as a fidelity factor of the translation reaction, by catalyzing a one-codon backward translocation of tRNAs on improperly translocated ribosomes. Back-translocation proceeds from a post-translocation (POST) complex to a pre-translocation (PRE) complex, thus giving elongation factor G a second chance to translocate the tRNAs correctly. Binds to ribosomes in a GTP-dependent manner. This chain is Elongation factor 4, found in Moorella thermoacetica (strain ATCC 39073 / JCM 9320).